Consider the following 86-residue polypeptide: Putative defensin-like protein 9 (86 aa).

Residues 1–29 form the signal peptide; sequence MKSSMQLISTLFFLVILVVAPGMKMVVEG. Pyrrolidone carboxylic acid is present on Gln30. Disulfide bonds link Cys34-Cys79, Cys45-Cys65, Cys51-Cys73, and Cys55-Cys75.

This sequence belongs to the DEFL family.

The protein localises to the secreted. This chain is Putative defensin-like protein 9 (LCR76), found in Arabidopsis thaliana (Mouse-ear cress).